A 157-amino-acid polypeptide reads, in one-letter code: MRIGIGIDVHSFKEGRKLIVGGVDIPSPKGLDGHSDADVLLHAVSDALLGAAALGDIGLHFPDTSPEFKDIDSMILLKHVGKLLEKNGWRTVNVDAMLLLEAPKIAPFVVDMRKNIARCLQIETDLVSVKATTNEKLGYIGREEGAAAHAVCIIEKA.

Residues D8 and H10 each coordinate a divalent metal cation. 4-CDP-2-C-methyl-D-erythritol 2-phosphate-binding positions include 8 to 10 (DVH) and 34 to 35 (HS). An a divalent metal cation-binding site is contributed by H42. 4-CDP-2-C-methyl-D-erythritol 2-phosphate-binding positions include 56-58 (DIG), 132-135 (TTNE), and R142.

It belongs to the IspF family. In terms of assembly, homotrimer. A divalent metal cation serves as cofactor.

It carries out the reaction 4-CDP-2-C-methyl-D-erythritol 2-phosphate = 2-C-methyl-D-erythritol 2,4-cyclic diphosphate + CMP. The protein operates within isoprenoid biosynthesis; isopentenyl diphosphate biosynthesis via DXP pathway; isopentenyl diphosphate from 1-deoxy-D-xylulose 5-phosphate: step 4/6. In terms of biological role, involved in the biosynthesis of isopentenyl diphosphate (IPP) and dimethylallyl diphosphate (DMAPP), two major building blocks of isoprenoid compounds. Catalyzes the conversion of 4-diphosphocytidyl-2-C-methyl-D-erythritol 2-phosphate (CDP-ME2P) to 2-C-methyl-D-erythritol 2,4-cyclodiphosphate (ME-CPP) with a corresponding release of cytidine 5-monophosphate (CMP). This is 2-C-methyl-D-erythritol 2,4-cyclodiphosphate synthase from Chlorobium phaeovibrioides (strain DSM 265 / 1930) (Prosthecochloris vibrioformis (strain DSM 265)).